The chain runs to 298 residues: Proline iminopeptidase (298 aa).

Residues 26–277 (VLLLHGGPAM…NGSHLAMWDD (252 aa)) enclose the AB hydrolase-1 domain. Ser103 functions as the Nucleophile in the catalytic mechanism. Asp244 is an active-site residue. Catalysis depends on His271, which acts as the Proton donor.

Belongs to the peptidase S33 family. Monomer.

It carries out the reaction Release of N-terminal proline from a peptide.. In terms of biological role, releases the N-terminal proline from various substrates. Cleaves specifically Pro-betaNA and small peptides containing proline at the amino terminal. No activity against hydroxyproline-betaNA. This chain is Proline iminopeptidase (fpaP), found in Elizabethkingia meningoseptica (Chryseobacterium meningosepticum).